Here is a 244-residue protein sequence, read N- to C-terminus: tRNA pseudouridine synthase A 2 (244 aa).

Asp52 (nucleophile) is an active-site residue. A substrate-binding site is contributed by Tyr110.

This sequence belongs to the tRNA pseudouridine synthase TruA family. In terms of assembly, homodimer.

It catalyses the reaction uridine(38/39/40) in tRNA = pseudouridine(38/39/40) in tRNA. Its function is as follows. Formation of pseudouridine at positions 38, 39 and 40 in the anticodon stem and loop of transfer RNAs. The sequence is that of tRNA pseudouridine synthase A 2 from Clostridium perfringens (strain 13 / Type A).